The chain runs to 656 residues: tRNA 5-methylaminomethyl-2-thiouridine biosynthesis bifunctional protein MnmC (656 aa).

The tRNA (mnm(5)s(2)U34)-methyltransferase stretch occupies residues M1–A236. The interval I260 to S656 is FAD-dependent cmnm(5)s(2)U34 oxidoreductase.

It in the N-terminal section; belongs to the methyltransferase superfamily. tRNA (mnm(5)s(2)U34)-methyltransferase family. In the C-terminal section; belongs to the DAO family. The cofactor is FAD.

The protein resides in the cytoplasm. The enzyme catalyses 5-aminomethyl-2-thiouridine(34) in tRNA + S-adenosyl-L-methionine = 5-methylaminomethyl-2-thiouridine(34) in tRNA + S-adenosyl-L-homocysteine + H(+). Its function is as follows. Catalyzes the last two steps in the biosynthesis of 5-methylaminomethyl-2-thiouridine (mnm(5)s(2)U) at the wobble position (U34) in tRNA. Catalyzes the FAD-dependent demodification of cmnm(5)s(2)U34 to nm(5)s(2)U34, followed by the transfer of a methyl group from S-adenosyl-L-methionine to nm(5)s(2)U34, to form mnm(5)s(2)U34. This chain is tRNA 5-methylaminomethyl-2-thiouridine biosynthesis bifunctional protein MnmC, found in Paraburkholderia xenovorans (strain LB400).